The chain runs to 352 residues: tRNA pseudouridine synthase D (352 aa).

The active-site Nucleophile is aspartate 81. Residues 157–303 (GVPNYFGLQR…MAHERRILRL (147 aa)) form the TRUD domain.

It belongs to the pseudouridine synthase TruD family.

The enzyme catalyses uridine(13) in tRNA = pseudouridine(13) in tRNA. Functionally, responsible for synthesis of pseudouridine from uracil-13 in transfer RNAs. This chain is tRNA pseudouridine synthase D, found in Ectopseudomonas mendocina (strain ymp) (Pseudomonas mendocina).